The following is a 539-amino-acid chain: Glutamyl-tRNA(Gln) amidotransferase subunit B, mitochondrial (539 aa).

The protein belongs to the GatB/GatE family. GatB subfamily. As to quaternary structure, subunit of the heterotrimeric GatFAB amidotransferase (AdT) complex, composed of A, B and F subunits.

Its subcellular location is the mitochondrion. The catalysed reaction is L-glutamyl-tRNA(Gln) + L-glutamine + ATP + H2O = L-glutaminyl-tRNA(Gln) + L-glutamate + ADP + phosphate + H(+). Functionally, allows the formation of correctly charged Gln-tRNA(Gln) through the transamidation of misacylated Glu-tRNA(Gln) in the mitochondria. The reaction takes place in the presence of glutamine and ATP through an activated gamma-phospho-Glu-tRNA(Gln). The polypeptide is Glutamyl-tRNA(Gln) amidotransferase subunit B, mitochondrial (Kluyveromyces lactis (strain ATCC 8585 / CBS 2359 / DSM 70799 / NBRC 1267 / NRRL Y-1140 / WM37) (Yeast)).